The primary structure comprises 398 residues: Acetate kinase (398 aa).

Residue N8 participates in Mg(2+) binding. K15 is an ATP binding site. Residue R89 coordinates substrate. D146 serves as the catalytic Proton donor/acceptor. Residues 206–210, 283–285, and 331–335 each bind ATP; these read HIGNG, DMR, and GMGEN. Residue E383 coordinates Mg(2+).

The protein belongs to the acetokinase family. As to quaternary structure, homodimer. Mg(2+) is required as a cofactor. Mn(2+) serves as cofactor.

The protein resides in the cytoplasm. It carries out the reaction acetate + ATP = acetyl phosphate + ADP. It participates in metabolic intermediate biosynthesis; acetyl-CoA biosynthesis; acetyl-CoA from acetate: step 1/2. Catalyzes the formation of acetyl phosphate from acetate and ATP. Can also catalyze the reverse reaction. This chain is Acetate kinase, found in Streptococcus pyogenes serotype M49 (strain NZ131).